Reading from the N-terminus, the 139-residue chain is D-ribose pyranase (139 aa).

Histidine 20 functions as the Proton donor in the catalytic mechanism. Residues aspartate 28, histidine 106, and 128–130 (YAN) each bind substrate.

The protein belongs to the RbsD / FucU family. RbsD subfamily. In terms of assembly, homodecamer.

It localises to the cytoplasm. It catalyses the reaction beta-D-ribopyranose = beta-D-ribofuranose. It functions in the pathway carbohydrate metabolism; D-ribose degradation; D-ribose 5-phosphate from beta-D-ribopyranose: step 1/2. Catalyzes the interconversion of beta-pyran and beta-furan forms of D-ribose. The chain is D-ribose pyranase from Vibrio parahaemolyticus serotype O3:K6 (strain RIMD 2210633).